Here is a 494-residue protein sequence, read N- to C-terminus: Ketol-acid reductoisomerase (NADP(+)) (494 aa).

A KARI N-terminal Rossmann domain is found at 14 to 208; sequence LDQLGRCRFM…GGHRAGCLES (195 aa). NADP(+) is bound by residues 45-48, arginine 68, arginine 76, serine 78, and 108-110; these read CGAQ and DKQ. The active site involves histidine 132. Glycine 158 contributes to the NADP(+) binding site. 2 KARI C-terminal knotted domains span residues 209 to 344 and 345 to 487; these read SFVA…NYPS and TDVE…MTDM. Residues aspartate 217, glutamate 221, glutamate 389, and glutamate 393 each contribute to the Mg(2+) site. Serine 414 is a binding site for substrate.

Belongs to the ketol-acid reductoisomerase family. It depends on Mg(2+) as a cofactor.

It carries out the reaction (2R)-2,3-dihydroxy-3-methylbutanoate + NADP(+) = (2S)-2-acetolactate + NADPH + H(+). The enzyme catalyses (2R,3R)-2,3-dihydroxy-3-methylpentanoate + NADP(+) = (S)-2-ethyl-2-hydroxy-3-oxobutanoate + NADPH + H(+). It participates in amino-acid biosynthesis; L-isoleucine biosynthesis; L-isoleucine from 2-oxobutanoate: step 2/4. It functions in the pathway amino-acid biosynthesis; L-valine biosynthesis; L-valine from pyruvate: step 2/4. In terms of biological role, involved in the biosynthesis of branched-chain amino acids (BCAA). Catalyzes an alkyl-migration followed by a ketol-acid reduction of (S)-2-acetolactate (S2AL) to yield (R)-2,3-dihydroxy-isovalerate. In the isomerase reaction, S2AL is rearranged via a Mg-dependent methyl migration to produce 3-hydroxy-3-methyl-2-ketobutyrate (HMKB). In the reductase reaction, this 2-ketoacid undergoes a metal-dependent reduction by NADPH to yield (R)-2,3-dihydroxy-isovalerate. The sequence is that of Ketol-acid reductoisomerase (NADP(+)) from Vibrio vulnificus (strain CMCP6).